Consider the following 380-residue polypeptide: Queuine tRNA-ribosyltransferase (380 aa).

Asp-93 serves as the catalytic Proton acceptor. Substrate is bound by residues 93 to 97 (DSGGF), Asp-147, Gln-198, and Gly-225. Residues 256–262 (GVGLPSN) are RNA binding. Residue Asp-275 is the Nucleophile of the active site. Positions 280–284 (ARNGR) are RNA binding; important for wobble base 34 recognition. Residues Cys-313, Cys-315, Cys-318, and His-344 each coordinate Zn(2+).

The protein belongs to the queuine tRNA-ribosyltransferase family. Homodimer. Within each dimer, one monomer is responsible for RNA recognition and catalysis, while the other monomer binds to the replacement base PreQ1. It depends on Zn(2+) as a cofactor.

It carries out the reaction 7-aminomethyl-7-carbaguanine + guanosine(34) in tRNA = 7-aminomethyl-7-carbaguanosine(34) in tRNA + guanine. The protein operates within tRNA modification; tRNA-queuosine biosynthesis. Functionally, catalyzes the base-exchange of a guanine (G) residue with the queuine precursor 7-aminomethyl-7-deazaguanine (PreQ1) at position 34 (anticodon wobble position) in tRNAs with GU(N) anticodons (tRNA-Asp, -Asn, -His and -Tyr). Catalysis occurs through a double-displacement mechanism. The nucleophile active site attacks the C1' of nucleotide 34 to detach the guanine base from the RNA, forming a covalent enzyme-RNA intermediate. The proton acceptor active site deprotonates the incoming PreQ1, allowing a nucleophilic attack on the C1' of the ribose to form the product. After dissociation, two additional enzymatic reactions on the tRNA convert PreQ1 to queuine (Q), resulting in the hypermodified nucleoside queuosine (7-(((4,5-cis-dihydroxy-2-cyclopenten-1-yl)amino)methyl)-7-deazaguanosine). The chain is Queuine tRNA-ribosyltransferase from Clostridium perfringens (strain 13 / Type A).